Reading from the N-terminus, the 201-residue chain is 3-isopropylmalate dehydratase small subunit (201 aa).

The protein belongs to the LeuD family. LeuD type 1 subfamily. In terms of assembly, heterodimer of LeuC and LeuD.

It carries out the reaction (2R,3S)-3-isopropylmalate = (2S)-2-isopropylmalate. It participates in amino-acid biosynthesis; L-leucine biosynthesis; L-leucine from 3-methyl-2-oxobutanoate: step 2/4. Functionally, catalyzes the isomerization between 2-isopropylmalate and 3-isopropylmalate, via the formation of 2-isopropylmaleate. The polypeptide is 3-isopropylmalate dehydratase small subunit (Nitrobacter hamburgensis (strain DSM 10229 / NCIMB 13809 / X14)).